We begin with the raw amino-acid sequence, 497 residues long: Lysine--tRNA ligase (497 aa).

The Mg(2+) site is built by E409 and E416.

This sequence belongs to the class-II aminoacyl-tRNA synthetase family. As to quaternary structure, homodimer. The cofactor is Mg(2+).

The protein localises to the cytoplasm. The enzyme catalyses tRNA(Lys) + L-lysine + ATP = L-lysyl-tRNA(Lys) + AMP + diphosphate. The chain is Lysine--tRNA ligase from Streptococcus pyogenes serotype M3 (strain ATCC BAA-595 / MGAS315).